The chain runs to 192 residues: MPKDKLVITVSGLAGSGTTTLSKKIAEHYGLKHVYAGLIFRQMAKEKGMSLEEFQKYAELHPEIDREVDRRQIEAAKEGNVVIEGRLAGWMVKNADLKIWLDAPIRVRAERVAKREGISVEEAFMKIAEREMQNRKRYLNLYGIDINDLSIYDLIINTSKWSPEGVFAIVKAAIDHLDPVGDAGSKKEKEVG.

12–20 (GLAGSGTTT) is a binding site for ATP.

It belongs to the cytidylate kinase family. Type 2 subfamily.

Its subcellular location is the cytoplasm. The enzyme catalyses CMP + ATP = CDP + ADP. The catalysed reaction is dCMP + ATP = dCDP + ADP. This is Cytidylate kinase (cmk) from Pyrococcus horikoshii (strain ATCC 700860 / DSM 12428 / JCM 9974 / NBRC 100139 / OT-3).